Here is a 447-residue protein sequence, read N- to C-terminus: GTPase Der (447 aa).

EngA-type G domains lie at P3 to D167 and I180 to N353. Residues G9–S16, D56–F60, N119–E122, G186–S193, D233–L237, and N298–D301 each bind GTP. Positions C354–T438 constitute a KH-like domain.

Belongs to the TRAFAC class TrmE-Era-EngA-EngB-Septin-like GTPase superfamily. EngA (Der) GTPase family. Associates with the 50S ribosomal subunit.

Its function is as follows. GTPase that plays an essential role in the late steps of ribosome biogenesis. This is GTPase Der from Albidiferax ferrireducens (strain ATCC BAA-621 / DSM 15236 / T118) (Rhodoferax ferrireducens).